Here is a 37-residue protein sequence, read N- to C-terminus: Large ribosomal subunit protein bL36 (37 aa).

This sequence belongs to the bacterial ribosomal protein bL36 family.

The sequence is that of Large ribosomal subunit protein bL36 from Geobacter metallireducens (strain ATCC 53774 / DSM 7210 / GS-15).